A 219-amino-acid polypeptide reads, in one-letter code: Lipid transferase CIDEA (219 aa).

In terms of domain architecture, CIDE-N spans 33 to 110 (PARPFRVSNH…ILEKGQKWMP (78 aa)). Positions 163-180 (CTGLKGLLRSLLRFLSYS) are amphipathic helix.

Belongs to the CIDE family. As to quaternary structure, homodimer. Interacts with CIDEC. Directly interacts with CEBPB. Interacts with isoform CLSTN3beta of CLSTN3; inhibiting the lipid transferase activity of CIDEA. In terms of tissue distribution, expressed in omental and subcutaneous adipose tissue (at protein level).

It is found in the lipid droplet. It localises to the nucleus. The catalysed reaction is a triacyl-sn-glycerol(in) = a triacyl-sn-glycerol(out). Lipid transferase that promotes unilocular lipid droplet formation by mediating lipid droplet fusion. Lipid droplet fusion promotes their enlargement, restricting lipolysis and favoring lipid storage. Localizes on the lipid droplet surface, at focal contact sites between lipid droplets, and mediates atypical lipid droplet fusion by promoting directional net neutral lipid transfer from the smaller to larger lipid droplets. The transfer direction may be driven by the internal pressure difference between the contacting lipid droplet pair and occurs at a lower rate than that promoted by CIDEC. May also act as a CEBPB coactivator in epithelial cells to control the expression of a subset of CEBPB downstream target genes, including ID2, IGF1, PRLR, SOCS1, SOCS3, XDH, but not casein. By interacting with CEBPB, strengthens the association of CEBPB with the XDH promoter, increases histone acetylation and dissociates HDAC1 from the promoter. When overexpressed, induces apoptosis; the physiological significance of its role in apoptosis is unclear. The sequence is that of Lipid transferase CIDEA from Homo sapiens (Human).